The following is a 599-amino-acid chain: NADH-ubiquinone oxidoreductase chain 5 (599 aa).

Transmembrane regions (helical) follow at residues M1 to F21, F28 to M48, C81 to M101, G115 to I135, G171 to F191, G193 to A213, T233 to I253, I265 to L285, L302 to I322, C323 to L343, S363 to F383, N398 to L420, V455 to L475, L481 to L501, I510 to I530, and L577 to I597.

It belongs to the complex I subunit 5 family.

The protein resides in the mitochondrion inner membrane. It catalyses the reaction a ubiquinone + NADH + 5 H(+)(in) = a ubiquinol + NAD(+) + 4 H(+)(out). Functionally, core subunit of the mitochondrial membrane respiratory chain NADH dehydrogenase (Complex I) that is believed to belong to the minimal assembly required for catalysis. Complex I functions in the transfer of electrons from NADH to the respiratory chain. The immediate electron acceptor for the enzyme is believed to be ubiquinone. This is NADH-ubiquinone oxidoreductase chain 5 (ND5) from Branchiostoma floridae (Florida lancelet).